Consider the following 35-residue polypeptide: Apolipophorin-3 (35 aa).

Equilibrium between a soluble monomer and a bound lipoprotein form. Apolipophorin-3 associates with lipophorin during lipid loading until each particle contains 9 or 14 molecules of apolipophorin-3. In terms of tissue distribution, hemolymph.

Its subcellular location is the secreted. In terms of biological role, assists in the loading of diacylglycerol, generated from triacylglycerol stores in the fat body through the action of adipokinetic hormone, into lipophorin, the hemolymph lipoprotein. It increases the lipid carrying capacity of lipophorin by covering the expanding hydrophobic surface resulting from diacylglycerol uptake. It thus plays a critical role in the transport of lipids during flight in several species of insects. Has hemagglutinating activity towards rabbit erythrocytes. This chain is Apolipophorin-3, found in Heliothis virescens (Tobacco budworm moth).